A 263-amino-acid polypeptide reads, in one-letter code: Stress-response A/B barrel domain-containing protein UP3 (263 aa).

Stress-response A/B barrel domains lie at 49–142 (IEHI…AVDW) and 158–252 (VAKL…VVEF). Positions 261–263 (SSL) match the Peroxisomal targeting signal motif.

In terms of assembly, homodimer.

Its subcellular location is the peroxisome. In terms of biological role, involved in stress response. The polypeptide is Stress-response A/B barrel domain-containing protein UP3 (Arabidopsis thaliana (Mouse-ear cress)).